Here is a 758-residue protein sequence, read N- to C-terminus: MIFKIEDVTVYFPYDNIYPEQYEYMVELKRALDAKGHCLLEMPTGTGKTIALLSLITSYRLSRPDSPIKLVYCTRTVHEMEKTLGELKLLHDYQVRHLGTQAKILALGLSSRKNLCVNTKVLAAENRDSVDAACRKRTASWVRALSTENPNVELCDFFENYEKAAENALLPPGVYTLEDLRAFGKNRGWCPYFLARHMIQFANVIVYSYQYLLDPKVAGFISKELQKESVVVFDEAHNIDNVCIEALSVSVRRVTLEGANRNLNKIRQEIDRFKATDAGRLRAEYNRLVEGLALRGDLSGGDQWLANPALPHDILKEAVPGNIRRAEHFVHVLRRLLQYLGVRLDTENVEKESPVSFVSSLNSQAGIEQKTLKFCYDRLQSLMLTLEITDTDEFLPIQTVCDFATLVGTYARGFSIIIEPYDERMPHIPDPILQLSCHDASLAIKPVFDRFQSVVITSGTLSPIDLYPRLLNFTPVVSRSFKMSMTRDCICPMVLTRGSDQLPVSTKFDMRSDPGVVRNYGKLLVEMVSIVPDGVVCFFVSYSYMDGIIATWNETGILKEIMQQKLVFIETQDVVETTLALDNYRRACDCGRGAVFFSVARGKVAEGIDFDRHYGRLVVMYGVPFQYTLSKILRARLEYLHDTFQIKEGDFLTFDALRQAAQCVGRVIRSKADYGMMIFADKRYSRHDKRSKLPGWILSHLRDAHLNLSTDMAIHIAREFLRKMAQPYDKAGTMGRKTLLTQEDLEKMAETGVQDMAY.

In terms of domain architecture, Helicase ATP-binding spans 7–285 (DVTVYFPYDN…TDAGRLRAEY (279 aa)). 42 to 49 (MPTGTGKT) lines the ATP pocket. Cysteine 116, cysteine 134, cysteine 155, and cysteine 190 together coordinate [4Fe-4S] cluster. A DEAH box motif is present at residues 234-238 (DEAHN).

This sequence belongs to the helicase family. RAD3/XPD subfamily. Component of the 7-subunit TFIIH core complex composed of XPB, XPD, TFB1/GTF2H1, GTF2H2/P44, TFB4/GTF2H3, TFB2/GTF2H4 and TFB5/GTF2H5, which is active in NER. The core complex associates with the 3-subunit CDK-activating kinase (CAK) module composed of CYCH1/cyclin H1, CDKD and MAT1/At4g30820 to form the 10-subunit holoenzyme (holo-TFIIH) active in transcription. Interacts with GTF2H2/p44. [4Fe-4S] cluster serves as cofactor. In terms of tissue distribution, expressed at low levels in all tissues.

It is found in the nucleus. It carries out the reaction Couples ATP hydrolysis with the unwinding of duplex DNA at the replication fork by translocating in the 5'-3' direction. This creates two antiparallel DNA single strands (ssDNA). The leading ssDNA polymer is the template for DNA polymerase III holoenzyme which synthesizes a continuous strand.. The catalysed reaction is ATP + H2O = ADP + phosphate + H(+). Functionally, ATP-dependent 5'-3' DNA helicase, component of the general transcription and DNA repair factor IIH (TFIIH) core complex, which is involved in general and transcription-coupled nucleotide excision repair (NER) of damaged DNA and, when complexed to CDK-activating kinase (CAK), involved in transcription by RNA polymerase II. In NER, TFIIH acts by opening DNA around the lesion to allow the excision of the damaged oligonucleotide and its replacement by a new DNA fragment. The ATP-dependent helicase activity of XPD is required for DNA opening. In transcription, TFIIH has an essential role in transcription initiation. When the pre-initiation complex (PIC) has been established, TFIIH is required for promoter opening and promoter escape. Phosphorylation of the C-terminal tail (CTD) of the largest subunit of RNA polymerase II by the kinase module CAK controls the initiation of transcription. XPD acts by forming a bridge between CAK and the core-TFIIH complex. Essential during plant growth. May negatively regulate a common response program mediated by UV damage and heat stress, that leads to tissue death and reduced chloroplast function. This Arabidopsis thaliana (Mouse-ear cress) protein is General transcription and DNA repair factor IIH helicase subunit XPD.